A 708-amino-acid polypeptide reads, in one-letter code: Protein SUPPRESSOR OF MAX2 1A (708 aa).

Residues 248 to 283 (QMASKPQEKAASPPGSPVRTDLVLGPKQTETTPEKT) form a disordered region. The EAR signature appears at 537-541 (FDLNE).

Belongs to the ClpA/ClpB family.

Probable component of a transcriptional corepressor complex that acts downstream of MAX2 to negatively regulate karrikins/strigolactone responses. Involved in the (-)-germacrene D signaling pathway influencing plant fitness and occurring in the stigma in a KAI2IA-dependent manner. The polypeptide is Protein SUPPRESSOR OF MAX2 1A (Petunia hybrida (Petunia)).